Here is a 339-residue protein sequence, read N- to C-terminus: N-acetyl-gamma-glutamyl-phosphate reductase (339 aa).

The active site involves cysteine 145.

It belongs to the NAGSA dehydrogenase family. Type 1 subfamily.

It localises to the cytoplasm. It catalyses the reaction N-acetyl-L-glutamate 5-semialdehyde + phosphate + NADP(+) = N-acetyl-L-glutamyl 5-phosphate + NADPH + H(+). Its pathway is amino-acid biosynthesis; L-arginine biosynthesis; N(2)-acetyl-L-ornithine from L-glutamate: step 3/4. Functionally, catalyzes the NADPH-dependent reduction of N-acetyl-5-glutamyl phosphate to yield N-acetyl-L-glutamate 5-semialdehyde. The polypeptide is N-acetyl-gamma-glutamyl-phosphate reductase (Thermotoga petrophila (strain ATCC BAA-488 / DSM 13995 / JCM 10881 / RKU-1)).